Reading from the N-terminus, the 257-residue chain is UPF0246 protein YaaA (257 aa).

The protein belongs to the UPF0246 family.

This Salmonella schwarzengrund (strain CVM19633) protein is UPF0246 protein YaaA.